We begin with the raw amino-acid sequence, 149 residues long: Putative pre-16S rRNA nuclease (149 aa).

This sequence belongs to the YqgF nuclease family.

It is found in the cytoplasm. Functionally, could be a nuclease involved in processing of the 5'-end of pre-16S rRNA. The chain is Putative pre-16S rRNA nuclease from Burkholderia vietnamiensis (strain G4 / LMG 22486) (Burkholderia cepacia (strain R1808)).